We begin with the raw amino-acid sequence, 75 residues long: Small ribosomal subunit protein bS18 (75 aa).

The protein belongs to the bacterial ribosomal protein bS18 family. As to quaternary structure, part of the 30S ribosomal subunit. Forms a tight heterodimer with protein bS6.

Its function is as follows. Binds as a heterodimer with protein bS6 to the central domain of the 16S rRNA, where it helps stabilize the platform of the 30S subunit. The sequence is that of Small ribosomal subunit protein bS18 from Moorella thermoacetica (strain ATCC 39073 / JCM 9320).